Here is a 307-residue protein sequence, read N- to C-terminus: Ornithine carbamoyltransferase (307 aa).

Residues 50 to 53 (STRT), glutamine 77, arginine 101, and 128 to 131 (HPCQ) contribute to the carbamoyl phosphate site. L-ornithine contacts are provided by residues asparagine 160, aspartate 224, and 228–229 (SM). Carbamoyl phosphate-binding positions include 264 to 265 (CL) and arginine 292.

This sequence belongs to the aspartate/ornithine carbamoyltransferase superfamily. OTCase family.

The protein localises to the cytoplasm. It catalyses the reaction carbamoyl phosphate + L-ornithine = L-citrulline + phosphate + H(+). It functions in the pathway amino-acid biosynthesis; L-arginine biosynthesis; L-arginine from L-ornithine and carbamoyl phosphate: step 1/3. Reversibly catalyzes the transfer of the carbamoyl group from carbamoyl phosphate (CP) to the N(epsilon) atom of ornithine (ORN) to produce L-citrulline. The chain is Ornithine carbamoyltransferase from Clavibacter michiganensis subsp. michiganensis (strain NCPPB 382).